Here is a 446-residue protein sequence, read N- to C-terminus: Minor teichoic acid biosynthesis protein GgaA (446 aa).

Belongs to the glycosyltransferase 2 family.

The protein operates within cell wall biogenesis; poly(glucopyranosyl N-acetylgalactosamine 1-phosphate) teichoic acid biosynthesis. Involved in the biosynthesis of galactosamine-containing minor teichoic acid, a non-essential cell wall polymer in B.subtilis 168. This Bacillus subtilis (strain 168) protein is Minor teichoic acid biosynthesis protein GgaA (ggaA).